The sequence spans 313 residues: Probable GTP 3',8-cyclase (313 aa).

The 221-residue stretch at valine 4–arginine 224 folds into the Radical SAM core domain. Arginine 13 contacts GTP. [4Fe-4S] cluster contacts are provided by cysteine 20, cysteine 24, and cysteine 27. Lysine 60 lines the GTP pocket. Glycine 64 contacts S-adenosyl-L-methionine. Residue threonine 90 coordinates GTP. Serine 114 is a binding site for S-adenosyl-L-methionine. A GTP-binding site is contributed by lysine 151. The [4Fe-4S] cluster site is built by cysteine 244 and cysteine 247. Arginine 249–arginine 251 contributes to the GTP binding site. Cysteine 261 serves as a coordination point for [4Fe-4S] cluster.

Belongs to the radical SAM superfamily. MoaA family. It depends on [4Fe-4S] cluster as a cofactor.

The catalysed reaction is GTP + AH2 + S-adenosyl-L-methionine = (8S)-3',8-cyclo-7,8-dihydroguanosine 5'-triphosphate + 5'-deoxyadenosine + L-methionine + A + H(+). It participates in cofactor biosynthesis; molybdopterin biosynthesis. Catalyzes the cyclization of GTP to (8S)-3',8-cyclo-7,8-dihydroguanosine 5'-triphosphate. This Sulfolobus acidocaldarius (strain ATCC 33909 / DSM 639 / JCM 8929 / NBRC 15157 / NCIMB 11770) protein is Probable GTP 3',8-cyclase.